A 326-amino-acid polypeptide reads, in one-letter code: tRNA-modifying protein YgfZ (326 aa).

2 residues coordinate folate: Trp-27 and Trp-189.

This sequence belongs to the tRNA-modifying YgfZ family.

It localises to the cytoplasm. Folate-binding protein involved in regulating the level of ATP-DnaA and in the modification of some tRNAs. It is probably a key factor in regulatory networks that act via tRNA modification, such as initiation of chromosomal replication. This is tRNA-modifying protein YgfZ from Shigella boydii serotype 18 (strain CDC 3083-94 / BS512).